We begin with the raw amino-acid sequence, 252 residues long: Acyltransferase PGAP2 (252 aa).

The Cytoplasmic portion of the chain corresponds to 1-22 (MVPVGPERGANSLFSLRFTTFA). A helical membrane pass occupies residues 23 to 43 (VGTVSLPLFAFLFCIVWSLLF). Topologically, residues 44 to 77 (NFSETTATHCHVPNYLPSVSAAIGGETPQRYIWR) are lumenal. A helical transmembrane segment spans residues 78–98 (LCIGLHSAPRFLVGVAYLHYY). Residues 99-111 (QGTPCSSPAYPRL) lie on the Cytoplasmic side of the membrane. A helical membrane pass occupies residues 112–132 (CHLNFLLNCCEIFFLILLTYV). At 133 to 142 (SSSENYEVHK) the chain is on the lumenal side. Residues 143 to 163 (LGFMAFMLFSVGYMFVTCSLW) traverse the membrane as a helical segment. Residues 164–184 (RVARKGSGSLEERTSYAWKKR) are Cytoplasmic-facing. The chain crosses the membrane as a helical span at residues 185 to 205 (LFGFYLLMFLSSILVYIWHNM). Over 206–208 (YCE) the chain is Lumenal. A helical transmembrane segment spans residues 209 to 229 (AGVYTVFALLEYLVVLSNMGF). The Cytoplasmic portion of the chain corresponds to 230-252 (HMTAWWDFGNKELMICSPGDKRI).

The protein belongs to the PGAP2 family.

It is found in the golgi apparatus membrane. Functionally, involved in the fatty acid remodeling steps of GPI-anchor maturation where the unsaturated acyl chain at sn-2 of inositol phosphate is replaced by a saturated stearoyl chain. May catalyze the second step of the fatty acid remodeling, by reacylating a lyso-GPI intermediate at sn-2 of inositol phosphate by a saturated chain. The fatty acid remodeling steps is critical for the integration of GPI-APs into lipid rafts. The protein is Acyltransferase PGAP2 of Xenopus tropicalis (Western clawed frog).